The chain runs to 184 residues: Elongation factor P (184 aa).

It belongs to the elongation factor P family.

The protein resides in the cytoplasm. Its pathway is protein biosynthesis; polypeptide chain elongation. In terms of biological role, involved in peptide bond synthesis. Stimulates efficient translation and peptide-bond synthesis on native or reconstituted 70S ribosomes in vitro. Probably functions indirectly by altering the affinity of the ribosome for aminoacyl-tRNA, thus increasing their reactivity as acceptors for peptidyl transferase. The chain is Elongation factor P from Albidiferax ferrireducens (strain ATCC BAA-621 / DSM 15236 / T118) (Rhodoferax ferrireducens).